The sequence spans 281 residues: Aldo-keto reductase MMAR_1744 (281 aa).

Catalysis depends on Tyr56, which acts as the Proton donor. NADPH is bound by residues Leu196, Ile234, Ser237, Thr245, Asn246, and Arg272.

The protein belongs to the aldo/keto reductase family.

The polypeptide is Aldo-keto reductase MMAR_1744 (Mycobacterium marinum (strain ATCC BAA-535 / M)).